Reading from the N-terminus, the 504-residue chain is One cut domain family member 2 (504 aa).

Disordered regions lie at residues 29–95 (LGTL…GTAA), 166–189 (KFHH…RLSG), 274–332 (EQHL…QLEE), and 485–504 (WQDD…CTKA). Residues 35 to 56 (PAGGGSGGGGGGGGGGGGGGPG) are compositionally biased toward gly residues. Residues 168-186 (HHPHPHHHPHHHHHHHHQR) show a composition bias toward basic residues. A DNA-binding region (CUT) is located at residues 324-410 (VATSGQLEEI…QRMSALRLAA (87 aa)). Positions 426 to 485 (QKKSRLVFTDLQRRTLFAIFKENKRPSKEMQITISQQLGLELTTVSNFFMNARRRSLEKW) form a DNA-binding region, homeobox. Positions 490–504 (STGGSSSTSSTCTKA) are enriched in low complexity.

The protein belongs to the CUT homeobox family.

It localises to the nucleus. Functionally, transcriptional activator. Activates the transcription of a number of liver genes such as HNF3B. This is One cut domain family member 2 (ONECUT2) from Homo sapiens (Human).